Here is a 706-residue protein sequence, read N- to C-terminus: ABC transporter D family member 2, chloroplastic (706 aa).

The N-terminal 44 residues, 1–44 (MILMITAPVCPPHLLLRHSSLLRHESSIGNFHRKKNPRFRTVSC), are a transit peptide targeting the chloroplast. Ser45 bears the N-acetylserine mark. A run of 5 helical transmembrane segments spans residues 88–108 (LAAVFALTLATTGISVGFNFL), 124–144 (FTKQLFYYLCAFAGGIPFFVL), 200–222 (TALSFSLTLVNATIDLISFSNIL), 237–257 (SFGGTAISVFLGKGLVNLNFL), and 326–346 (ILPVAVVAPMYFSGKIEFGVI). The region spanning 88-372 (LAAVFALTLA…VVYQFQAISS (285 aa)) is the ABC transmembrane type-1 domain. Residues 430 to 697 (LEIEELTLQT…DAQDSLYGRL (268 aa)) enclose the ABC transporter domain. 464–471 (GPSGSGKT) provides a ligand contact to ATP. Positions 545-569 (TTPGGSNIDGSPPLLIREDGNEKPT) are disordered. Basic and acidic residues predominate over residues 560 to 569 (IREDGNEKPT).

This sequence belongs to the ABC transporter superfamily. ABCD family. Peroxisomal fatty acyl CoA transporter (TC 3.A.1.203) subfamily. In terms of assembly, homodimer or heterodimer.

Its subcellular location is the membrane. It is found in the plastid. It localises to the chloroplast. This Arabidopsis thaliana (Mouse-ear cress) protein is ABC transporter D family member 2, chloroplastic (ABCC2).